The following is a 246-amino-acid chain: Polyhedrin (246 aa).

The protein belongs to the polyhedrin family.

Functionally, major component of the virus occlusion bodies, which are large proteinaceous structures (polyhedra), that protect the virus from the outside environment for extended periods until they are ingested by insect larvae. The chain is Polyhedrin (PH) from Heliothis zea nuclear polyhedrosis virus (HzSNPV).